The following is a 193-amino-acid chain: Holliday junction branch migration complex subunit RuvA (193 aa).

Positions 1-64 (MIGRIAGTLI…EDAHLLYGFG (64 aa)) are domain I. Residues 65–143 (TASERNTFRE…AELGHVPGTP (79 aa)) form a domain II region. The segment at 144–151 (AVPDSAVD) is flexible linker. The domain III stretch occupies residues 151–193 (DVLNALLALGYSEKEAAAAIKQVPAGTGVSDGIKLALKALSKA).

The protein belongs to the RuvA family. As to quaternary structure, homotetramer. Forms an RuvA(8)-RuvB(12)-Holliday junction (HJ) complex. HJ DNA is sandwiched between 2 RuvA tetramers; dsDNA enters through RuvA and exits via RuvB. An RuvB hexamer assembles on each DNA strand where it exits the tetramer. Each RuvB hexamer is contacted by two RuvA subunits (via domain III) on 2 adjacent RuvB subunits; this complex drives branch migration. In the full resolvosome a probable DNA-RuvA(4)-RuvB(12)-RuvC(2) complex forms which resolves the HJ.

It localises to the cytoplasm. Its function is as follows. The RuvA-RuvB-RuvC complex processes Holliday junction (HJ) DNA during genetic recombination and DNA repair, while the RuvA-RuvB complex plays an important role in the rescue of blocked DNA replication forks via replication fork reversal (RFR). RuvA specifically binds to HJ cruciform DNA, conferring on it an open structure. The RuvB hexamer acts as an ATP-dependent pump, pulling dsDNA into and through the RuvAB complex. HJ branch migration allows RuvC to scan DNA until it finds its consensus sequence, where it cleaves and resolves the cruciform DNA. The protein is Holliday junction branch migration complex subunit RuvA of Cupriavidus necator (strain ATCC 17699 / DSM 428 / KCTC 22496 / NCIMB 10442 / H16 / Stanier 337) (Ralstonia eutropha).